The sequence spans 943 residues: Mechanosensitive ion channel protein BA (943 aa).

A disordered region spans residues 1-67 (MPNPNDVTID…PPSSSLGFGH (67 aa)). The Cytoplasmic portion of the chain corresponds to 1–107 (MPNPNDVTID…AVLNFSTVTR (107 aa)). Residues 14–37 (TSVSSRGQTGARNNSTNIPNSPSG) are compositionally biased toward polar residues. A helical membrane pass occupies residues 108–130 (YLIYIAPLAALLAIPIIVGATAA). Residues 131–149 (EDAKIGGVSLPWFFCWVEV) are Lumenal-facing. Residues 150–175 (VWVSLWVCKLVAKVIPFVFQFVCGIV) traverse the membrane as a helical segment. The Cytoplasmic portion of the chain corresponds to 176-195 (SAGTRKYALILRNLEIPITM). Residues 196 to 214 (VLWMIVSLVTFLPIMVYNP) form a helical membrane-spanning segment. Over 215-233 (RNKREGDTETKSWEKSVKN) the chain is Lumenal. Residues 234–259 (VLFAFLVCALIFLGEKTLVQLISISY) traverse the membrane as a helical segment. The Cytoplasmic segment spans residues 260–468 (HRKQFDARIK…DQAIHVLDNL (209 aa)). Residues 412–447 (GKEAEAEECFTMLDRDGNGDISLDEIILAISEIGRT) enclose the EF-hand domain. Asp425, Asp427, Asn429, Asp431, and Glu436 together coordinate Ca(2+). Residues 469 to 489 (LATIAFIIAVLVFVSFVTSGF) traverse the membrane as a helical segment. Residues 490–502 (GTVIAAGATSLLS) are Lumenal-facing. Residues 503–523 (LSFVFATTAQEVLGSCIFLFV) form a helical membrane-spanning segment. Residues 524 to 943 (KHPFDIGDRV…QRRNYESRRL (420 aa)) are Cytoplasmic-facing. A disordered region spans residues 677–943 (PGAAAEDAAA…QRRNYESRRL (267 aa)). 2 stretches are compositionally biased toward low complexity: residues 678–687 (GAAAEDAAAA) and 744–759 (GASATAATGNNSAGSA). Positions 760–781 (YSETTLNNTVSEPYQRSFTPNT) are enriched in polar residues. Positions 798–810 (TERHLGVSHDSIA) are enriched in basic and acidic residues. A compositionally biased stretch (polar residues) spans 827–842 (TTANQSLASPTTMQSE). Positions 857 to 880 (PSSSQYSQQYPQQQSQSPYSYTYS) are enriched in low complexity. A compositionally biased stretch (polar residues) spans 886–904 (PESSLQPLEHTTSYNQSLP). Over residues 916–943 (NSLEGHSPHVDPRHMTEEQRRNYESRRL) the composition is skewed to basic and acidic residues.

It belongs to the MscS (TC 1.A.23) family.

Its subcellular location is the cell membrane. The catalysed reaction is Ca(2+)(in) = Ca(2+)(out). Acts as a mechanosensitive calcium channel in response to membrane stretch. Regulates intracellular calcium levels and cell volume for survival in response to hypo-osmotic shock. Involved in maintaining vacuole integrity and protecting the nuclear envelope upon hypo-osmotic shock. seems to contribute to CaCl2 toxicityIn contracstz to mscA, mscB seems to contribute to CaCl(2) toxicity. This is Mechanosensitive ion channel protein BA from Emericella nidulans (strain FGSC A4 / ATCC 38163 / CBS 112.46 / NRRL 194 / M139) (Aspergillus nidulans).